Consider the following 320-residue polypeptide: Ribose-phosphate pyrophosphokinase (320 aa).

ATP is bound by residues 43–45 (DGE) and 102–103 (RQ). Residues histidine 136 and aspartate 178 each contribute to the Mg(2+) site. Residue lysine 201 is part of the active site. D-ribose 5-phosphate contacts are provided by residues arginine 203, aspartate 227, and 231–235 (DTAGT).

The protein belongs to the ribose-phosphate pyrophosphokinase family. Class I subfamily. In terms of assembly, homohexamer. It depends on Mg(2+) as a cofactor.

The protein localises to the cytoplasm. The enzyme catalyses D-ribose 5-phosphate + ATP = 5-phospho-alpha-D-ribose 1-diphosphate + AMP + H(+). It participates in metabolic intermediate biosynthesis; 5-phospho-alpha-D-ribose 1-diphosphate biosynthesis; 5-phospho-alpha-D-ribose 1-diphosphate from D-ribose 5-phosphate (route I): step 1/1. Its function is as follows. Involved in the biosynthesis of the central metabolite phospho-alpha-D-ribosyl-1-pyrophosphate (PRPP) via the transfer of pyrophosphoryl group from ATP to 1-hydroxyl of ribose-5-phosphate (Rib-5-P). The polypeptide is Ribose-phosphate pyrophosphokinase (Clostridium tetani (strain Massachusetts / E88)).